A 208-amino-acid chain; its full sequence is Cytochrome c oxidase assembly protein CtaG (208 aa).

Topologically, residues 1–19 are cytoplasmic; the sequence is MSPPLPQAPQQPAPRRGLG. Residues 20–42 form a helical; Signal-anchor for type II membrane protein membrane-spanning segment; it reads HDTAVAAVCGLVVALMVGASFAA. At 43-208 the chain is on the periplasmic side; it reads VPFYNWFCRT…SEPAPRKGNL (166 aa).

This sequence belongs to the COX11/CtaG family.

The protein resides in the cell inner membrane. Exerts its effect at some terminal stage of cytochrome c oxidase synthesis, probably by being involved in the insertion of the copper B into subunit I. This chain is Cytochrome c oxidase assembly protein CtaG, found in Rhodopseudomonas palustris (strain TIE-1).